A 123-amino-acid chain; its full sequence is NADH-quinone oxidoreductase subunit A (123 aa).

Transmembrane regions (helical) follow at residues 11-31, 67-87, and 92-112; these read FPVL…VSIG, LVAI…PWGV, and IGWP…LGFA.

It belongs to the complex I subunit 3 family. In terms of assembly, NDH-1 is composed of 14 different subunits. Subunits NuoA, H, J, K, L, M, N constitute the membrane sector of the complex.

It is found in the cell inner membrane. It carries out the reaction a quinone + NADH + 5 H(+)(in) = a quinol + NAD(+) + 4 H(+)(out). Functionally, NDH-1 shuttles electrons from NADH, via FMN and iron-sulfur (Fe-S) centers, to quinones in the respiratory chain. The immediate electron acceptor for the enzyme in this species is believed to be ubiquinone. Couples the redox reaction to proton translocation (for every two electrons transferred, four hydrogen ions are translocated across the cytoplasmic membrane), and thus conserves the redox energy in a proton gradient. The chain is NADH-quinone oxidoreductase subunit A from Paraburkholderia phymatum (strain DSM 17167 / CIP 108236 / LMG 21445 / STM815) (Burkholderia phymatum).